The chain runs to 212 residues: ATP phosphoribosyltransferase (212 aa).

Belongs to the ATP phosphoribosyltransferase family. Short subfamily. In terms of assembly, heteromultimer composed of HisG and HisZ subunits.

Its subcellular location is the cytoplasm. The catalysed reaction is 1-(5-phospho-beta-D-ribosyl)-ATP + diphosphate = 5-phospho-alpha-D-ribose 1-diphosphate + ATP. It participates in amino-acid biosynthesis; L-histidine biosynthesis; L-histidine from 5-phospho-alpha-D-ribose 1-diphosphate: step 1/9. Its function is as follows. Catalyzes the condensation of ATP and 5-phosphoribose 1-diphosphate to form N'-(5'-phosphoribosyl)-ATP (PR-ATP). Has a crucial role in the pathway because the rate of histidine biosynthesis seems to be controlled primarily by regulation of HisG enzymatic activity. This Prochlorococcus marinus (strain MIT 9515) protein is ATP phosphoribosyltransferase.